We begin with the raw amino-acid sequence, 804 residues long: Leucine--tRNA ligase (804 aa).

The 'HIGH' region signature appears at 40–51; the sequence is PYPSGAGLHVGH. The 'KMSKS' region motif lies at 576-580; that stretch reads KMSKS. Position 579 (Lys579) interacts with ATP.

Belongs to the class-I aminoacyl-tRNA synthetase family.

It localises to the cytoplasm. It carries out the reaction tRNA(Leu) + L-leucine + ATP = L-leucyl-tRNA(Leu) + AMP + diphosphate. This Staphylococcus epidermidis (strain ATCC 35984 / DSM 28319 / BCRC 17069 / CCUG 31568 / BM 3577 / RP62A) protein is Leucine--tRNA ligase.